Here is a 289-residue protein sequence, read N- to C-terminus: BTB/POZ domain-containing protein KCTD7 (289 aa).

The disordered stretch occupies residues 1 to 42; that stretch reads MVVVTGREPDSRHSDGAMSSSEAEDDFLEPATPTATQAGHGL. One can recognise a BTB domain in the interval 53–141; that stretch reads VPLNIGGAHF…YAIGPLLEQL (89 aa).

In terms of assembly, interacts with CUL3. As to expression, high expression in brain, particularly in post-mitotic neurons. Expressed in the mitral cells of the olfactory bulbs, the hippocampus, the deep layers of the cerebral cortex and Purkinje cells of the cerebellum. Not detected in astrocytes or microglial cells. Also expressed in heart, liver, spleen and kidney.

Its subcellular location is the cell membrane. It localises to the cytoplasm. The protein resides in the cytosol. In terms of biological role, may be involved in the control of excitability of cortical neurons. The chain is BTB/POZ domain-containing protein KCTD7 (Kctd7) from Mus musculus (Mouse).